A 354-amino-acid polypeptide reads, in one-letter code: Guanine nucleotide-binding protein G(i) subunit alpha-1 (354 aa).

The N-myristoyl glycine moiety is linked to residue Gly-2. A lipid anchor (S-palmitoyl cysteine) is attached at Cys-3. Positions 32 to 354 (REVKLLLLGA…KNNLKDCGLF (323 aa)) constitute a G-alpha domain. The G1 motif stretch occupies residues 35–48 (KLLLLGAGESGKST). GTP is bound by residues 43-48 (ESGKST), 150-151 (DS), and 175-178 (LRTR). Ser-47 contributes to the Mg(2+) binding site. A G2 motif region spans residues 173–181 (DVLRTRVKT). A Mg(2+)-binding site is contributed by Thr-181. The G3 motif stretch occupies residues 196–205 (FKMFDVGGQR). GTP contacts are provided by residues 200–204 (DVGGQ), 269–272 (NKKD), and Ala-326. A G4 motif region spans residues 265–272 (ILFLNKKD). Residues 324 to 329 (TCATDT) are G5 motif.

It belongs to the G-alpha family. G(i/o/t/z) subfamily. Heterotrimeric G proteins are composed of 3 units; alpha, beta and gamma. The alpha chain contains the guanine nucleotide binding site. Part of a spindle orientation complex. Identified in complex with the beta subunit GNB1 and the gamma subunit GNG1. Identified in complex with the beta subunit GNB1 and the gamma subunit GNG2. GTP binding causes dissociation of the heterotrimer, liberating the individual subunits so that they can interact with downstream effector proteins. Myristoylation at Gly-2 is required for membrane anchoring before palmitoylation. In terms of processing, palmitoylation at Cys-3 varies with membrane lipid composition.

It localises to the nucleus. Its subcellular location is the cytoplasm. The protein resides in the cell membrane. The protein localises to the cytoskeleton. It is found in the microtubule organizing center. It localises to the centrosome. Its subcellular location is the cell cortex. The protein resides in the membrane. The catalysed reaction is GTP + H2O = GDP + phosphate + H(+). In terms of biological role, guanine nucleotide-binding proteins (G proteins) function as transducers downstream of G protein-coupled receptors (GPCRs) in numerous signaling cascades. The alpha chain contains the guanine nucleotide binding site and alternates between an active, GTP-bound state and an inactive, GDP-bound state. Signaling by an activated GPCR promotes GDP release and GTP binding. The alpha subunit has a low GTPase activity that converts bound GTP to GDP, thereby terminating the signal. Both GDP release and GTP hydrolysis are modulated by numerous regulatory proteins. Signaling is mediated via effector proteins, such as adenylate cyclase. Inhibits adenylate cyclase activity, leading to decreased intracellular cAMP levels. Required for cortical dynein-dynactin complex recruitment during metaphase. This chain is Guanine nucleotide-binding protein G(i) subunit alpha-1 (gnai1), found in Oryzias latipes (Japanese rice fish).